The following is an 872-amino-acid chain: MDQHHGVRGGAPIRRPRRSIETRSHPFRAAGNTQRTYSTPRLSYRDGLSGRASSLEPGGQAHDQNESSTQSTSNNQPSTSFWGYLRRVFSDDAPAQPQAPRSRADFAPPPEEDSSSEEEDEEGPSQAPLDEEDQLMYADQYSVGNSSDDNEEDYLQPEVEYPTSAESGEYHNSGMFAEEEPESESESDMENYETYEENDTEVISDDSHRLTRTWLDRSIRLMDDALAQSSEISKAITKSTRRLYDSQFTPGGRGYKQTETPSQRLVHLSRAGMYDSDEIVMTGDYMEVDDDPNSAYQSWVRAIHHPVAMNPSWEETISNHTNTSFSADIDYDIDELIEMNLARTPPVFEGLLDSADFFYRLPMLYTYATITQDEAYEERQAWSNTQALHGHEQSSWPALVSDYSKGGMYVSPTQEPRGIWRRALKQAMALQLKLCVLGLTEFVTKRELTQHHSAVTFLVDSLLRTAKNCYLASRLLVFAWERRRETGVRRPAEPLIALSGVTLLQPLPPEVSELLEQRTFDIGLRTPQSGVFRAFFGPLVYWAELRRALRDPAAINCRYVGFHLQTSEIYLLARAHSASPGYTKEELVAMEATLTLGTLMLEVALQWIHVASAQLLSENDALKAFRRVSASIPHALAPLGSIRLHDAEFEVLSNPDVMVARDETALSQALFLGYFSVRTALTACMRDYANEVDGGSKETVTGLFLGVGLIIQRLAGHMNFLLNCMAGAALYGGSKIAIHSLTLPRYSLLADVMAPMLQQQSLVDFWRARDDMLEELEITPRPGPPTQGKRVVLEMPLPSDDLPAMTPSGQVNNGAGLGRMVDMAKHLQHYRETIIGDDASSSVGKRGLMKSGVGVRHALEAEKVIRYSPKST.

The disordered stretch occupies residues 1–206 (MDQHHGVRGG…ENDTEVISDD (206 aa)). The short motif at 13–33 (IRRPRRSIETRSHPFRAAGNT) is the Nuclear localization signal element. A compositionally biased stretch (polar residues) spans 31–41 (GNTQRTYSTPR). 2 stretches are compositionally biased toward low complexity: residues 66 to 80 (ESST…PSTS) and 91 to 101 (DDAPAQPQAPR). 2 stretches are compositionally biased toward acidic residues: residues 110–134 (PEED…EEDQ) and 177–204 (AEEE…EVIS).

The protein belongs to the alphaherpesvirinae HHV-1 UL47 family. As to quaternary structure, interacts with US3 kinase. Interacts with UL31 and UL34; these interactions seem important for efficient virion nuclear egress. Interacts with UL41/VHS. In terms of processing, phosphorylated by US3. This phosphorylation is required for proper nuclear localization. Post-translationally, O-glycosylated.

It is found in the virion tegument. The protein resides in the host nucleus. Its subcellular location is the host cytoplasm. In terms of biological role, tegument protein that can bind to various RNA transcripts. Plays a role in the attenuation of selective viral and cellular mRNA degradation by modulating the activity of host shutoff RNase UL41/VHS. Also plays a role in the primary envelopment of virions in the perinuclear space, probably by interacting with two nuclear egress proteins UL31 and UL34. This is Tegument protein UL47 homolog (13) from Equus caballus (Horse).